Reading from the N-terminus, the 381-residue chain is Homoserine O-succinyltransferase (381 aa).

One can recognise an AB hydrolase-1 domain in the interval 45-360 (NAVLVCHALN…PHGHDAFLLD (316 aa)). Ser-151 functions as the Nucleophile in the catalytic mechanism. Residue Arg-221 coordinates substrate. Residues Asp-321 and His-354 contribute to the active site. Substrate is bound at residue Asp-355.

Belongs to the AB hydrolase superfamily. MetX family. As to quaternary structure, homodimer.

It localises to the cytoplasm. The catalysed reaction is L-homoserine + succinyl-CoA = O-succinyl-L-homoserine + CoA. It functions in the pathway amino-acid biosynthesis; L-methionine biosynthesis via de novo pathway; O-succinyl-L-homoserine from L-homoserine: step 1/1. Functionally, transfers a succinyl group from succinyl-CoA to L-homoserine, forming succinyl-L-homoserine. This chain is Homoserine O-succinyltransferase, found in Burkholderia lata (strain ATCC 17760 / DSM 23089 / LMG 22485 / NCIMB 9086 / R18194 / 383).